A 224-amino-acid polypeptide reads, in one-letter code: Uracil-DNA glycosylase 2 (224 aa).

Asp64 acts as the Proton acceptor in catalysis.

This sequence belongs to the uracil-DNA glycosylase (UDG) superfamily. UNG family.

It localises to the cytoplasm. The enzyme catalyses Hydrolyzes single-stranded DNA or mismatched double-stranded DNA and polynucleotides, releasing free uracil.. Its function is as follows. Excises uracil residues from the DNA which can arise as a result of misincorporation of dUMP residues by DNA polymerase or due to deamination of cytosine. The polypeptide is Uracil-DNA glycosylase 2 (Listeria innocua serovar 6a (strain ATCC BAA-680 / CLIP 11262)).